Consider the following 418-residue polypeptide: Xanthosine permease (418 aa).

Over 1 to 9 (MSIAMRLKV) the chain is Cytoplasmic. A helical membrane pass occupies residues 10-30 (MSFLQYFIWGSWLVTLGSYMI). Over 31-41 (NTLHFTGANVG) the chain is Periplasmic. Residues 42–62 (MVYSSKGIAAIIMPGIMGIIA) traverse the membrane as a helical segment. Over 63–70 (DKWLRAER) the chain is Cytoplasmic. The next 2 membrane-spanning stretches (helical) occupy residues 71 to 91 (AYML…SVTD) and 92 to 112 (PDMM…TIAL). At 113 to 136 (SNSVSYSCLAQAGLDPVTAFPPIR) the chain is on the cytoplasmic side. A helical transmembrane segment spans residues 137–157 (VFGTVGFIVAMWAVSLLHLEL). Topologically, residues 158–159 (SS) are periplasmic. The chain crosses the membrane as a helical span at residues 160-180 (LQLYIASGASLLLSAYALTLP). Over 181–209 (KIPVAEKKATTSLASKLGLDAFVLFKNPR) the chain is Cytoplasmic. Residues 210 to 230 (MAIFFLFAMMLGAVLQITNVF) traverse the membrane as a helical segment. The Periplasmic portion of the chain corresponds to 231–254 (GNPFLHDFARNPEFADSFVVKYPS). Residues 255–275 (ILLSVSQMAEVGFILTIPFFL) form a helical membrane-spanning segment. Topologically, residues 276 to 277 (KR) are cytoplasmic. The chain crosses the membrane as a helical span at residues 278–298 (FGIKTVMLMSMVAWTLRFGFF). Residues 299–306 (AYGDPSTT) are Periplasmic-facing. The chain crosses the membrane as a helical span at residues 307-327 (GFILLLLSMIVYGCAFDFFNI). The Cytoplasmic portion of the chain corresponds to 328–348 (SGSVFVEQEVDSSIRASAQGL). Residues 349–369 (FMTMVNGVGAWVGSILSGMAV) form a helical membrane-spanning segment. Topologically, residues 370-381 (DYFSVDGVKDWQ) are periplasmic. Residues 382-402 (TIWLVFAGYALFLAVIFFFGF) form a helical membrane-spanning segment. Residues 403–418 (KYNHDPEKIKHRAVTH) lie on the Cytoplasmic side of the membrane.

It belongs to the major facilitator superfamily. Nucleoside:H(+) symporter (NHS) (TC 2.A.1.10) family.

The protein localises to the cell inner membrane. It catalyses the reaction xanthosine(in) + H(+)(in) = xanthosine(out) + H(+)(out). With respect to regulation, transport is abolished by the proton uncoupler 2,4-dinitrophenol. In terms of biological role, uptake of xanthosine. Can also transport other nucleosides such as inosine, adenosine, cytidine, uridine and thymidine. Transport is driven by a proton motive force. This Escherichia coli (strain K12) protein is Xanthosine permease.